A 293-amino-acid polypeptide reads, in one-letter code: Ribonuclease P/MRP protein subunit RPP1 (293 aa).

The protein belongs to the eukaryotic/archaeal RNase P protein component 3 family. Component of nuclear RNase P and RNase MRP complexes. RNase P consists of an RNA moiety and at least 9 protein subunits including POP1, POP3, POP4, POP5, POP6, POP7, POP8, RPP1 and RPR2. RNase MRP complex consists of an RNA moiety and at least 10 protein subunits including POP1, POP3, POP4, POP5, POP6, POP7, POP8, RMP1, RPP1 and SNM1, many of which are shared with the RNase P complex.

Its subcellular location is the nucleus. It carries out the reaction Endonucleolytic cleavage of RNA, removing 5'-extranucleotides from tRNA precursor.. Its function is as follows. Component of ribonuclease P, a protein complex that generates mature tRNA molecules by cleaving their 5'-ends. Also a component of RNase MRP, which cleaves pre-rRNA sequences. The polypeptide is Ribonuclease P/MRP protein subunit RPP1 (RPP1) (Saccharomyces cerevisiae (strain ATCC 204508 / S288c) (Baker's yeast)).